A 348-amino-acid chain; its full sequence is Probable dual-specificity RNA methyltransferase RlmN (348 aa).

The Proton acceptor role is filled by E93. Residues 99–333 (TEKRLTACLS…VSLRKSRGLD (235 aa)) form the Radical SAM core domain. C106 and C338 form a disulfide bridge. The [4Fe-4S] cluster site is built by C113, C117, and C120. S-adenosyl-L-methionine is bound by residues 160–161 (GE), S190, 219–221 (SLH), and N295. The active-site S-methylcysteine intermediate is the C338.

It belongs to the radical SAM superfamily. RlmN family. [4Fe-4S] cluster is required as a cofactor.

It localises to the cytoplasm. It catalyses the reaction adenosine(2503) in 23S rRNA + 2 reduced [2Fe-2S]-[ferredoxin] + 2 S-adenosyl-L-methionine = 2-methyladenosine(2503) in 23S rRNA + 5'-deoxyadenosine + L-methionine + 2 oxidized [2Fe-2S]-[ferredoxin] + S-adenosyl-L-homocysteine. The enzyme catalyses adenosine(37) in tRNA + 2 reduced [2Fe-2S]-[ferredoxin] + 2 S-adenosyl-L-methionine = 2-methyladenosine(37) in tRNA + 5'-deoxyadenosine + L-methionine + 2 oxidized [2Fe-2S]-[ferredoxin] + S-adenosyl-L-homocysteine. In terms of biological role, specifically methylates position 2 of adenine 2503 in 23S rRNA and position 2 of adenine 37 in tRNAs. In Prochlorococcus marinus (strain MIT 9215), this protein is Probable dual-specificity RNA methyltransferase RlmN.